Consider the following 301-residue polypeptide: Outer membrane porin G (301 aa).

Residues 1 to 21 (MKKLLPCTALVMCAGMACAQA) form the signal peptide. 16 beta stranded membrane passes run 27–35 (WHFNIGAMY), 47–57 (MDGLAEPSVYF), 64–72 (WRIALAYYQ), 89–98 (RPELEVHYQF), 104–112 (FSFGLTGGF), 129–136 (NMQRWKIA), 149–158 (FNGWLSMYKF), 172–182 (VETETGLQYTF), 186–195 (VALRVNYYLE), 201–209 (DDSRNNGEF), 213–222 (EIRAYLPLTL), 230–238 (YTRIGLDRW), 240–248 (NWDWQDDIE), 254–265 (FNRVGLFYGYDF), 269–279 (LSVSLEYAFEW), and 289–300 (KFHYAGVGVNYS).

As to quaternary structure, monomer.

The protein localises to the cell outer membrane. Forms channels functionally larger than those of classical porins. Its function is as follows. May act as a regulator of the RCS-phosphorelay signal transduction pathway. In Escherichia coli (strain K12), this protein is Outer membrane porin G (ompG).